A 158-amino-acid polypeptide reads, in one-letter code: Phosphopantetheine adenylyltransferase (158 aa).

Serine 8 provides a ligand contact to substrate. ATP is bound by residues 8-9 and histidine 16; that span reads SF. Substrate-binding residues include lysine 40, threonine 72, and arginine 86. Residues 87 to 89, glutamate 97, and 122 to 128 contribute to the ATP site; these read GLR and HSFLSSS.

This sequence belongs to the bacterial CoaD family. As to quaternary structure, homohexamer. Requires Mg(2+) as cofactor.

It is found in the cytoplasm. The enzyme catalyses (R)-4'-phosphopantetheine + ATP + H(+) = 3'-dephospho-CoA + diphosphate. The protein operates within cofactor biosynthesis; coenzyme A biosynthesis; CoA from (R)-pantothenate: step 4/5. Its function is as follows. Reversibly transfers an adenylyl group from ATP to 4'-phosphopantetheine, yielding dephospho-CoA (dPCoA) and pyrophosphate. This Prochlorococcus marinus (strain NATL2A) protein is Phosphopantetheine adenylyltransferase.